The primary structure comprises 3926 residues: Hybrid PKS-NRPS synthetase LUC5 (3926 aa).

One can recognise a Ketosynthase family 3 (KS3) domain in the interval 8-439 (REPIAIVGTA…GTNAHAIIES (432 aa)). Residues cysteine 181, histidine 318, and histidine 359 each act as for beta-ketoacyl synthase activity in the active site. The interval 545-863 (VFTGQGAQWP…QGALTRNVHD (319 aa)) is malonyl-CoA:ACP transacylase (MAT) domain. Positions 932–1065 (HPLLGTRSTE…GHLRVDFGSE (134 aa)) are N-terminal hotdog fold. The interval 932-1225 (HPLLGTRSTE…GLTCTSLLRP (294 aa)) is dehydratase (DH) domain. A PKS/mFAS DH domain is found at 932 to 1228 (HPLLGTRSTE…CTSLLRPGPS (297 aa)). The Proton acceptor; for dehydratase activity role is filled by histidine 964. The interval 1081 to 1228 (LTSVNIERFY…CTSLLRPGPS (148 aa)) is C-terminal hotdog fold. The active-site Proton donor; for dehydratase activity is the aspartate 1138. Residues 1344 to 1572 (IRAVGENLTE…VNDFYDPSKY (229 aa)) form a C-methyltransferase (CMeT) domain region. Positions 2091–2265 (TYLLAGCTGG…AASVIHIGMI (175 aa)) are ketoreductase (KR) domain 1. The Carrier 1 domain occupies 2371 to 2448 (EMLEVVEEEF…EICSTAVASL (78 aa)). O-(pantetheine 4'-phosphoryl)serine is present on serine 2408. Residues 2474–2506 (VSGNGSSSSRAPTEFNSSTLKSGAQSTQGTSVS) show a composition bias toward polar residues. Residues 2474–2518 (VSGNGSSSSRAPTEFNSSTLKSGAQSTQGTSVSGDKDTNSVDGSA) form a disordered region. Over residues 2507–2518 (GDKDTNSVDGSA) the composition is skewed to basic and acidic residues. The condensation stretch occupies residues 2525-2810 (PLSFAQERIW…VNLLPLRFQL (286 aa)). The tract at residues 2979 to 3389 (DWVKRQPDAI…RIAGDSQIKL (411 aa)) is adenylation. The region spanning 3501–3580 (ETLTTTQERL…GMAAKIDGST (80 aa)) is the Carrier 2 domain. Serine 3540 carries the post-translational modification O-(pantetheine 4'-phosphoryl)serine. The interval 3619–3840 (LTGATGFLGL…DFVPVEQVAD (222 aa)) is thiolester reductase (TE) domain.

This sequence in the C-terminal section; belongs to the NRP synthetase family.

Its pathway is mycotoxin biosynthesis. Functionally, hybrid PKS-NRPS synthetase; part of the gene cluster that mediates the biosynthesis of the mycotoxin lucilactaene and the lucilactaene-related compound NG-391 that act as cell cycle inhibitors with potent growth inhibitory activity against malarial parasites, moderate growth inhibitory activity against cancer cells, and no activity against bacteria and fungi. The hybrid PKS-NRPS synthetase LUC5 is responsible for the condensation of one acetyl-coenzyme A (CoA) unit with six malonyl-CoA units and the amide linkage of the arising heptaketide and homoserine, subsequently releasing the first intermediate prelucilactaene B, as an alcohol with an open ring structure. Lucilactaene and NG-391 lack the 7-methyl group present in fusarins which is inserted in fusarins by the C-methyltransferase (CMeT) domain of the fusarin synthetase FUS1, suggesting that the CMet domain of LUC5 does not methylate this position. Within the pathway, both the cytochrome P450 monooxygenase LUC2 and the hydrolase LUC6 function in parallel in modification of prelucilactaene B. LUC6 may catalyze the 2-pyrrolidone ring formation to form prelucilactaene C from prelucilactaene B, followed by C-15 hydroxylation by the same enzyme to give prelucilactaene D, which is then converted to prelucilactaene E by epoxidation, and finally to prelucilactaene F by cyclization. Prelucilactane D, prelucilactaene E, and prelucilactaene F can be converted to dihydrolucilactaene, NG391, and lucilactaene, respectively, via C-20 methyl group hydroxylation by the cytochrome P450 monooxygenase LUC2. However, LUC2, unlike FUS8 in fusarin C biosynthesis, is not enough for the full oxidation of the C-20 methyl group into carboxylic acid, which is a prerequisite for the final methylation step. The aldehyde dehydrogenase LUC3 is involved in the biosynthesis by further oxidation of the C-20 alcoholic analog prelucilactaene G into a carboxylic derivative. This unidentified carboxylic derivative may be converted to demethyllucilactaene. As the last step, the methyltransferase LUC1 methylates the hydroxyl group at C-21 of demethyllucilactaene to generate lucilactaene. This chain is Hybrid PKS-NRPS synthetase LUC5, found in Fusarium sp.